The chain runs to 802 residues: Sucrose synthase 1 (802 aa).

The tract at residues 272–749 is GT-B glycosyltransferase; sequence MMFNVVILSP…GLQRIYEKYT (478 aa).

This sequence belongs to the glycosyltransferase 1 family. Plant sucrose synthase subfamily.

The enzyme catalyses an NDP-alpha-D-glucose + D-fructose = a ribonucleoside 5'-diphosphate + sucrose + H(+). Functionally, sucrose-cleaving enzyme that provides UDP-glucose and fructose for various metabolic pathways. Most active in the sink tissues where it is responsible for the breakdown of the arriving sucrose. The chain is Sucrose synthase 1 (SH-1) from Zea mays (Maize).